The chain runs to 101 residues: Small ribosomal subunit protein uS14 (101 aa).

Belongs to the universal ribosomal protein uS14 family. As to quaternary structure, part of the 30S ribosomal subunit. Contacts proteins S3 and S10.

Its function is as follows. Binds 16S rRNA, required for the assembly of 30S particles and may also be responsible for determining the conformation of the 16S rRNA at the A site. The polypeptide is Small ribosomal subunit protein uS14 (Citrobacter koseri (strain ATCC BAA-895 / CDC 4225-83 / SGSC4696)).